The chain runs to 396 residues: Tryptophan synthase beta chain (396 aa).

Lys-88 carries the post-translational modification N6-(pyridoxal phosphate)lysine.

This sequence belongs to the TrpB family. In terms of assembly, tetramer of two alpha and two beta chains. It depends on pyridoxal 5'-phosphate as a cofactor.

The enzyme catalyses (1S,2R)-1-C-(indol-3-yl)glycerol 3-phosphate + L-serine = D-glyceraldehyde 3-phosphate + L-tryptophan + H2O. It functions in the pathway amino-acid biosynthesis; L-tryptophan biosynthesis; L-tryptophan from chorismate: step 5/5. In terms of biological role, the beta subunit is responsible for the synthesis of L-tryptophan from indole and L-serine. This is Tryptophan synthase beta chain from Shewanella baltica (strain OS155 / ATCC BAA-1091).